Here is a 414-residue protein sequence, read N- to C-terminus: MAMNFVTFNQDYSYLAVATSKGFRIFTTDPFAKSYETKEGNIAIIEMLFSTSLVALILSPRRLQITNTKRQSTICELTFPTTVLAVKLNRKRLVIVLEDQIYLYDIQTMKLLYTIETSPNPNAICALSPSSDNCYLAYPLPQKAPPSSFNPPSHAPPGSTHVSPTTGEVLIFDALKLEAINVIEAHRSPLACITLNSDGTLIATASDKGTIIRVFSVPDGHKLYQFRRGSIPSRIYSMSFNTTSTLLCVSSSTETIHLFKLSHQTSSREGSPSSALSRERAASQSSLGTSPDPDDPTDDMESSEIASRKHNGTLMGMIRRTSQNVGSSFAAKVGGYLPKGVSEMWEPARDFAWIKLPKTNQTAGANGNAGSLRSVVAMSNNTPQVMVVTSDGNFYVFNIDLSKGGEGTLTKQYS.

WD repeat units lie at residues 1–36, 69–114, 185–225, and 230–269; these read MAMN…KSYE, KRQS…LLYT, AHRS…KLYQ, and SIPS…SSRE. The short motif at 226–230 is the L/FRRG motif element; the sequence is FRRGS. A disordered region spans residues 261–314; it reads LSHQTSSREGSPSSALSRERAASQSSLGTSPDPDDPTDDMESSEIASRKHNGTL. Over residues 262–289 the composition is skewed to polar residues; the sequence is SHQTSSREGSPSSALSRERAASQSSLGT. The segment covering 292–302 has biased composition (acidic residues); it reads DPDDPTDDMES. 2 WD repeats span residues 309–355 and 367–407; these read KHNG…AWIK and GNAG…GGEG.

Belongs to the WD repeat PROPPIN family. Component of the PI(3,5)P2 regulatory complex.

It localises to the preautophagosomal structure membrane. Its subcellular location is the vacuole membrane. The protein resides in the endosome membrane. Its function is as follows. The PI(3,5)P2 regulatory complex regulates both the synthesis and turnover of phosphatidylinositol 3,5-bisphosphate (PtdIns(3,5)P2). Necessary for proper vacuole morphology. Plays an important role in osmotically-induced vacuole fragmentation. Required for cytoplasm to vacuole transport (Cvt) vesicle formation, pexophagy and starvation-induced autophagy. Involved in correct atg9 trafficking to the pre-autophagosomal structure. Might also be involved in premeiotic DNA replication. The protein is Autophagy-related protein 18 (atg18) of Aspergillus terreus (strain NIH 2624 / FGSC A1156).